We begin with the raw amino-acid sequence, 298 residues long: GTPase Era (298 aa).

The region spanning 3 to 170 (KSGFVAILGR…IKLLTDNLEE (168 aa)) is the Era-type G domain. The tract at residues 11 to 18 (GRPNVGKS) is G1. 11-18 (GRPNVGKS) is a GTP binding site. Positions 37–41 (QTTRN) are G2. Residues 58 to 61 (DTPG) form a G3 region. GTP-binding positions include 58 to 62 (DTPGI) and 120 to 123 (NKID). Positions 120-123 (NKID) are G4. The segment at 149 to 151 (ISA) is G5. A KH type-2 domain is found at 201-279 (TQQEVPHSVA…YLETWVKVKK (79 aa)).

This sequence belongs to the TRAFAC class TrmE-Era-EngA-EngB-Septin-like GTPase superfamily. Era GTPase family. Monomer.

The protein resides in the cytoplasm. The protein localises to the cell membrane. An essential GTPase that binds both GDP and GTP, with rapid nucleotide exchange. Plays a role in 16S rRNA processing and 30S ribosomal subunit biogenesis and possibly also in cell cycle regulation and energy metabolism. The chain is GTPase Era from Streptococcus pyogenes serotype M3 (strain ATCC BAA-595 / MGAS315).